We begin with the raw amino-acid sequence, 137 residues long: Fluoride-specific ion channel FluC 2 (137 aa).

The next 4 helical transmembrane spans lie at 3–23, 44–64, 76–96, and 111–131; these read MGGS…SVLG, WGTM…GALA, PWLF…SFSL, and LGNV…GFLL. Positions 86 and 89 each coordinate Na(+).

The protein belongs to the fluoride channel Fluc/FEX (TC 1.A.43) family.

Its subcellular location is the cell inner membrane. It catalyses the reaction fluoride(in) = fluoride(out). Its activity is regulated as follows. Na(+) is not transported, but it plays an essential structural role and its presence is essential for fluoride channel function. Functionally, fluoride-specific ion channel. Important for reducing fluoride concentration in the cell, thus reducing its toxicity. This chain is Fluoride-specific ion channel FluC 2, found in Bradyrhizobium diazoefficiens (strain JCM 10833 / BCRC 13528 / IAM 13628 / NBRC 14792 / USDA 110).